A 345-amino-acid chain; its full sequence is Biotin synthase (345 aa).

Residues 66–291 (PEVEVEGIIS…RTMLRFAGGR (226 aa)) form the Radical SAM core domain. 3 residues coordinate [4Fe-4S] cluster: Cys81, Cys85, and Cys88. [2Fe-2S] cluster contacts are provided by Cys124, Cys157, Cys216, and Arg286.

Belongs to the radical SAM superfamily. Biotin synthase family. As to quaternary structure, homodimer. [4Fe-4S] cluster is required as a cofactor. The cofactor is [2Fe-2S] cluster.

The catalysed reaction is (4R,5S)-dethiobiotin + (sulfur carrier)-SH + 2 reduced [2Fe-2S]-[ferredoxin] + 2 S-adenosyl-L-methionine = (sulfur carrier)-H + biotin + 2 5'-deoxyadenosine + 2 L-methionine + 2 oxidized [2Fe-2S]-[ferredoxin]. Its pathway is cofactor biosynthesis; biotin biosynthesis; biotin from 7,8-diaminononanoate: step 2/2. Catalyzes the conversion of dethiobiotin (DTB) to biotin by the insertion of a sulfur atom into dethiobiotin via a radical-based mechanism. This chain is Biotin synthase, found in Mycobacterium avium (strain 104).